We begin with the raw amino-acid sequence, 323 residues long: Ankyrin repeat and SOCS box protein 11 (323 aa).

ANK repeat units lie at residues A64–L93, N97–G126, H130–F159, H162–H191, Q195–H224, and W227–R256. An SOCS box domain is found at V274–Q323.

This sequence belongs to the ankyrin SOCS box (ASB) family. As to quaternary structure, substrate-recognition component of the ECS(ASB11) complex, composed of ASB11, CUL5, ELOB, ELOC and RNF7/RBX2.

It localises to the endoplasmic reticulum. It participates in protein modification; protein ubiquitination. Its function is as follows. Substrate-recognition component of a cullin-5-RING E3 ubiquitin-protein ligase complex (ECS complex, also named CRL5 complex), which mediates the ubiquitination and subsequent proteasomal degradation of target proteins, such as BIK, DIRAS2 and RPN1. The ECS(ASB11) complex acts as a regulator of the endoplasmic reticulum unfolded protein response by mediating ubiquitination and degradation of BIK. The sequence is that of Ankyrin repeat and SOCS box protein 11 (ASB11) from Pongo abelii (Sumatran orangutan).